A 449-amino-acid polypeptide reads, in one-letter code: AP-4 complex subunit mu-1 (449 aa).

The 265-residue stretch at 184 to 448 (KNEVFLDVVE…LSHSNAYVIR (265 aa)) folds into the MHD domain.

It belongs to the adaptor complexes medium subunit family. As to quaternary structure, adaptor protein complex 4 (AP-4) is a heterotetramer composed of two large adaptins (epsilon-type subunit AP4E1 and beta-type subunit AP4B1), a medium adaptin (mu-type subunit AP4M1) and a small adaptin (sigma-type AP4S1). Interacts with tyrosine-based sorting signals on the cytoplasmic tail of cargo proteins such as APP, ATG9A, LAMP2 and NAGPA. Interacts with the C-terminal domain of GRID2. Interacts with GRIA1 and GRIA2; the interaction is indirect via CACNG3. Interacts with CACNG3; CACNG3 associates GRIA1 and GRIA2 with the adaptor protein complex 4 (AP-4) to target them to the somatodendritic compartment of neurons. Interacts with HOOK1 and HOOK2; the interactions are direct, mediate the interaction between FTS-Hook-FHIP (FHF) complex and AP-4 and the perinuclear distribution of AP-4.

It localises to the golgi apparatus. The protein resides in the trans-Golgi network membrane. It is found in the early endosome. Its function is as follows. Component of the adaptor protein complex 4 (AP-4). Adaptor protein complexes are vesicle coat components involved both in vesicle formation and cargo selection. They control the vesicular transport of proteins in different trafficking pathways. AP-4 forms a non clathrin-associated coat on vesicles departing the trans-Golgi network (TGN) and may be involved in the targeting of proteins from the trans-Golgi network (TGN) to the endosomal-lysosomal system. It is also involved in protein sorting to the basolateral membrane in epithelial cells and the proper asymmetric localization of somatodendritic proteins in neurons. Within AP-4, the mu-type subunit AP4M1 is directly involved in the recognition and binding of tyrosine-based sorting signals found in the cytoplasmic part of cargos. The adaptor protein complex 4 (AP-4) may also recognize other types of sorting signal. In Mus musculus (Mouse), this protein is AP-4 complex subunit mu-1.